We begin with the raw amino-acid sequence, 367 residues long: Alginate lyase (367 aa).

The signal sequence occupies residues 1–24; it reads MTAFKRIFSPALLVLALYGGAAHA. Residues 63–64, 136–137, and tyrosine 254 each bind substrate; these read SK and HT.

It belongs to the polysaccharide lyase 5 family.

The protein localises to the periplasm. The catalysed reaction is Eliminative cleavage of alginate to give oligosaccharides with 4-deoxy-alpha-L-erythro-hex-4-enuronosyl groups at their non-reducing ends and beta-D-mannuronate at their reducing end.. In terms of biological role, catalyzes the depolymerization of alginate by cleaving the beta-1,4 glycosidic bond between two adjacent sugar residues via a beta-elimination mechanism. May serve to degrade mislocalized alginate that is trapped in the periplasmic space. This is Alginate lyase from Pseudomonas putida (strain W619).